The sequence spans 448 residues: MTDNNLFPEPKKIVWRVSELNRHVRVILEQTFPLLWVSGEISNLKRYPSGHWYFSLKDDNAQVRCVMFRHKNMYLDWMPQDGAQVEAQALITLYEARGEFQLTIERLRRAGLGVLFETFERLKTRLQQEGLFNPEYKQLIPPYPQQIGIITSTNTAALRDVLTTLQRRLPSLPVVIYPAPVQGKEAASAIVTALQIATQRSECDVLILCRGGGSIEDLWAFNEEIVARAIAACPIPIVTGIGHETDFTIADFVADMRAPTPTGAAQLAAPDRQDILHRLQYWQHRLQQAIERNIERRMQTTDLLAHRLVHPGERIRYQLIHLSQLHNRLLHAWSRQLEVCKWRIEAFRRRIQFTKPDINTGKRYQQELAARLQRAMVYRLESLQVQLIRQQQHLAHLDPKAVLERGYSITYTAGGEILQDSQQIHTGDNVQIVFAKGSAKANITETNK.

It belongs to the XseA family. Heterooligomer composed of large and small subunits.

The protein localises to the cytoplasm. It catalyses the reaction Exonucleolytic cleavage in either 5'- to 3'- or 3'- to 5'-direction to yield nucleoside 5'-phosphates.. Bidirectionally degrades single-stranded DNA into large acid-insoluble oligonucleotides, which are then degraded further into small acid-soluble oligonucleotides. This chain is Exodeoxyribonuclease 7 large subunit, found in Nitrosomonas eutropha (strain DSM 101675 / C91 / Nm57).